Here is a 25-residue protein sequence, read N- to C-terminus: Large ribosomal subunit protein uL30 (25 aa).

The protein belongs to the universal ribosomal protein uL30 family. Part of the 50S ribosomal subunit.

This chain is Large ribosomal subunit protein uL30 (rpmD), found in Pseudomonas putida (Arthrobacter siderocapsulatus).